A 203-amino-acid polypeptide reads, in one-letter code: Thymidylate kinase (203 aa).

14–21 (GGEGIGKS) contributes to the ATP binding site.

Belongs to the thymidylate kinase family.

The catalysed reaction is dTMP + ATP = dTDP + ADP. Functionally, phosphorylation of dTMP to form dTDP in both de novo and salvage pathways of dTTP synthesis. The polypeptide is Thymidylate kinase (Rickettsia rickettsii (strain Iowa)).